The sequence spans 101 residues: Small ribosomal subunit protein uS14A (101 aa).

Disordered regions lie at residues 1 to 21 and 49 to 73; these read MAKKSKIAKNEQRKEVVAHHA and QRLPRDASPTRVRNRDAADGRPRGT. Composition is skewed to basic and acidic residues over residues 8-21 and 61-70; these read AKNEQRKEVVAHHA and RNRDAADGRP.

This sequence belongs to the universal ribosomal protein uS14 family. In terms of assembly, part of the 30S ribosomal subunit. Contacts proteins S3 and S10.

In terms of biological role, binds 16S rRNA, required for the assembly of 30S particles and may also be responsible for determining the conformation of the 16S rRNA at the A site. In Kineococcus radiotolerans (strain ATCC BAA-149 / DSM 14245 / SRS30216), this protein is Small ribosomal subunit protein uS14A.